Consider the following 121-residue polypeptide: Heimdall profilin (121 aa).

The protein belongs to the Asgard profilin family.

The protein localises to the cytoplasm. It is found in the cytoskeleton. Its function is as follows. Binds to actin and affects the structure of the cytoskeleton. At high concentrations inhibits spontaneous rabbit actin nucleation. This strongly suggests this archaea has a profilin-regulated actin system, and actin-type genes can be identified in this organism. The polypeptide is Heimdall profilin (Heimdallarchaeota archaeon (strain LC_2)).